The following is a 174-amino-acid chain: Ribosome maturation factor RimM (174 aa).

One can recognise a PRC barrel domain in the interval 97–171 (EGYYYDFDII…RMVIDPIPGL (75 aa)).

It belongs to the RimM family. As to quaternary structure, binds ribosomal protein uS19.

The protein resides in the cytoplasm. An accessory protein needed during the final step in the assembly of 30S ribosomal subunit, possibly for assembly of the head region. Essential for efficient processing of 16S rRNA. May be needed both before and after RbfA during the maturation of 16S rRNA. It has affinity for free ribosomal 30S subunits but not for 70S ribosomes. The polypeptide is Ribosome maturation factor RimM (Symbiobacterium thermophilum (strain DSM 24528 / JCM 14929 / IAM 14863 / T)).